A 264-amino-acid chain; its full sequence is Small ribosomal subunit protein uS2 (264 aa).

Residues 228 to 264 are disordered; the sequence is QLDAEDDYEDYDGSEYDDDYEETEYTDAVIPDEETEE. A compositionally biased stretch (acidic residues) spans 230 to 264; sequence DAEDDYEDYDGSEYDDDYEETEYTDAVIPDEETEE.

This sequence belongs to the universal ribosomal protein uS2 family.

The chain is Small ribosomal subunit protein uS2 from Nostoc punctiforme (strain ATCC 29133 / PCC 73102).